The following is a 383-amino-acid chain: ATP phosphoribosyltransferase regulatory subunit (383 aa).

It belongs to the class-II aminoacyl-tRNA synthetase family. HisZ subfamily. Heteromultimer composed of HisG and HisZ subunits.

The protein localises to the cytoplasm. It participates in amino-acid biosynthesis; L-histidine biosynthesis; L-histidine from 5-phospho-alpha-D-ribose 1-diphosphate: step 1/9. Functionally, required for the first step of histidine biosynthesis. May allow the feedback regulation of ATP phosphoribosyltransferase activity by histidine. This is ATP phosphoribosyltransferase regulatory subunit from Desulfitobacterium hafniense (strain Y51).